Consider the following 285-residue polypeptide: Putative cysteine-rich repeat secretory protein 14 (285 aa).

The N-terminal stretch at 1-30 (MSSFCLSKHLILVPILVMMAQLLLIRNVLS) is a signal peptide. 2 Gnk2-homologous domains span residues 37–143 (YLYH…SIST) and 161–273 (RPNA…RYPF).

This sequence belongs to the cysteine-rich repeat secretory protein family.

The protein resides in the secreted. The polypeptide is Putative cysteine-rich repeat secretory protein 14 (CRRSP14) (Arabidopsis thaliana (Mouse-ear cress)).